The sequence spans 557 residues: Urocanate hydratase (557 aa).

The segment at 1-20 (MSNPRHNEREVRSPRGDELN) is disordered. NAD(+)-binding positions include 52–53 (GG), Gln130, 176–178 (GMG), Glu196, Arg201, 242–243 (NA), 263–267 (QTSAH), 273–274 (YL), and Tyr322. The active site involves Cys410. Gly492 lines the NAD(+) pocket.

Belongs to the urocanase family. NAD(+) is required as a cofactor.

The protein resides in the cytoplasm. It carries out the reaction 4-imidazolone-5-propanoate = trans-urocanate + H2O. It participates in amino-acid degradation; L-histidine degradation into L-glutamate; N-formimidoyl-L-glutamate from L-histidine: step 2/3. In terms of biological role, catalyzes the conversion of urocanate to 4-imidazolone-5-propionate. This Brucella ovis (strain ATCC 25840 / 63/290 / NCTC 10512) protein is Urocanate hydratase.